The sequence spans 1571 residues: Disco-interacting protein 2 homolog A (1571 aa).

Positions 9–127 (EAAPLPAEVR…KRRSVLVHSS (119 aa)) constitute a DMAP1-binding domain. Residues 60–203 (LQAENRIPGP…APSAAATPGA (144 aa)) form a disordered region. The segment covering 86 to 98 (ASRDERFRSDVHT) has biased composition (basic and acidic residues). Ser94 bears the Phosphoserine mark. Composition is skewed to polar residues over residues 127–139 (SVET…TSSA) and 152–162 (LTSTPLQSHSS). Thr132 and Thr155 each carry phosphothreonine. Residues 174-203 (SSTSSSASSTSSHPGGRPTTAPSAAATPGA) show a composition bias toward low complexity. 2 consecutive short sequence motifs (PXXP motif; required for interaction with CTTN) follow at residues 283–286 (PKRP) and 307–310 (PNQP). The segment at 302–327 (VQQPDPNQPKPEGSETSVLRGEPLTA) is disordered.

This sequence belongs to the DIP2 family. As to quaternary structure, interacts with FSTL1; DIP2A may act as a cell surface receptor for FSTL1. Interacts (via N-terminus) with CTTN (via SH3 domain); the interaction promotes acetylation of CTTN and is required for proper synaptic transmission. Interacts with SHANK3. As to expression, low expression in all tissues tested.

The protein localises to the cell membrane. The protein resides in the mitochondrion. Its subcellular location is the cell projection. It localises to the dendritic spine. It carries out the reaction acetate + ATP + CoA = acetyl-CoA + AMP + diphosphate. Its function is as follows. Catalyzes the de novo synthesis of acetyl-CoA in vitro. Promotes acetylation of CTTN, possibly by providing the acetyl donor, ensuring correct dendritic spine morphology and synaptic transmission. Binds to follistatin-related protein FSTL1 and may act as a cell surface receptor for FSTL1, contributing to AKT activation and subsequent FSTL1-induced survival and function of endothelial cells and cardiac myocytes. The sequence is that of Disco-interacting protein 2 homolog A (DIP2A) from Homo sapiens (Human).